Consider the following 253-residue polypeptide: 2-C-methyl-D-erythritol 4-phosphate cytidylyltransferase (253 aa).

Belongs to the IspD/TarI cytidylyltransferase family. IspD subfamily.

It catalyses the reaction 2-C-methyl-D-erythritol 4-phosphate + CTP + H(+) = 4-CDP-2-C-methyl-D-erythritol + diphosphate. Its pathway is isoprenoid biosynthesis; isopentenyl diphosphate biosynthesis via DXP pathway; isopentenyl diphosphate from 1-deoxy-D-xylulose 5-phosphate: step 2/6. Catalyzes the formation of 4-diphosphocytidyl-2-C-methyl-D-erythritol from CTP and 2-C-methyl-D-erythritol 4-phosphate (MEP). This Idiomarina loihiensis (strain ATCC BAA-735 / DSM 15497 / L2-TR) protein is 2-C-methyl-D-erythritol 4-phosphate cytidylyltransferase.